The sequence spans 352 residues: rRNA 2'-O-methyltransferase fibrillarin (352 aa).

Residues 1-115 (MGRPEFNRGG…GGAGGMRGGK (115 aa)) form a disordered region. Arg-8, Arg-16, Arg-19, Arg-23, Arg-27, Arg-35, Arg-43, Arg-51, Arg-55, Arg-58, Arg-63, Arg-67, Arg-70, Arg-75, Arg-81, Arg-85, Arg-91, Arg-95, Arg-98, Arg-102, Arg-105, and Arg-112 each carry asymmetric dimethylarginine. The segment covering 8-18 (RGGGGGGFRGG) has biased composition (gly residues). The segment covering 26–59 (SRGGFGGGGRGGYGGGDRGSFGGGDRGGFRGGRG) has biased composition (gly residues). The segment covering 66-113 (FRGGRGGGDRGGFGGRGSPRGGFGGRGSPRGGRGSPRGGRGGAGGMRG) has biased composition (gly residues). Residues 203-204 (TT), 222-223 (EF), 247-248 (DA), and 267-270 (DVAQ) contribute to the S-adenosyl-L-methionine site.

This sequence belongs to the methyltransferase superfamily. Fibrillarin family. In terms of assembly, component of box C/D small nucleolar ribonucleoprotein (snoRNP) particles. It is associated with the U3, U8 and U13 small nuclear RNAs. Post-translationally, by homology to other fibrillarins, some or all of the N-terminal domain arginines are modified to asymmetric dimethylarginine (DMA).

The protein resides in the nucleus. It is found in the nucleolus. The protein localises to the nucleoplasm. The enzyme catalyses L-glutaminyl-[histone H2A] + S-adenosyl-L-methionine = N(5)-methyl-L-glutaminyl-[histone H2A] + S-adenosyl-L-homocysteine + H(+). S-adenosyl-L-methionine-dependent methyltransferase that has the ability to methylate both RNAs and proteins. Involved in pre-rRNA processing. Utilizes the methyl donor S-adenosyl-L-methionine to catalyze the site-specific 2'-hydroxyl methylation of ribose moieties in pre-ribosomal RNA. Site specificity is provided by a guide RNA that base pairs with the substrate. Methylation occurs at a characteristic distance from the sequence involved in base pairing with the guide RNA. Also acts as a protein methyltransferase by mediating methylation of 'Gln-105' of histone H2A (H2AQ105me), a modification that impairs binding of the FACT complex and is specifically present at 35S ribosomal DNA locus. Plays a role in modulation of nucleolus size most likely through regulating the ribosomal RNA (rRNA) pool. The sequence is that of rRNA 2'-O-methyltransferase fibrillarin from Caenorhabditis elegans.